A 494-amino-acid chain; its full sequence is One cut domain family member 3 (494 aa).

3 disordered regions span residues A130–A162, L199–L239, and A295–E319. 2 stretches are compositionally biased toward pro residues: residues A148–Q158 and P214–L225. Positions G297–S313 are enriched in gly residues. A DNA-binding region (CUT) is located at residues P312–A398. The segment at residues P414–W473 is a DNA-binding region (homeobox). Residues E475–A494 form a disordered region. Residues E476–A494 are compositionally biased toward low complexity.

This sequence belongs to the CUT homeobox family.

It is found in the nucleus. Its function is as follows. Transcriptional activator. Binds the consensus DNA sequence 5'-DHWATTGAYTWWD-3' on a variety of gene promoters such as those of HNF3B and TTR. This is One cut domain family member 3 (ONECUT3) from Homo sapiens (Human).